The primary structure comprises 316 residues: Methionyl-tRNA formyltransferase (316 aa).

117–120 (SLLP) contacts (6S)-5,6,7,8-tetrahydrofolate.

The protein belongs to the Fmt family.

It carries out the reaction L-methionyl-tRNA(fMet) + (6R)-10-formyltetrahydrofolate = N-formyl-L-methionyl-tRNA(fMet) + (6S)-5,6,7,8-tetrahydrofolate + H(+). Attaches a formyl group to the free amino group of methionyl-tRNA(fMet). The formyl group appears to play a dual role in the initiator identity of N-formylmethionyl-tRNA by promoting its recognition by IF2 and preventing the misappropriation of this tRNA by the elongation apparatus. The chain is Methionyl-tRNA formyltransferase from Janthinobacterium sp. (strain Marseille) (Minibacterium massiliensis).